Consider the following 200-residue polypeptide: Imidazoleglycerol-phosphate dehydratase (200 aa).

It belongs to the imidazoleglycerol-phosphate dehydratase family.

It localises to the cytoplasm. The enzyme catalyses D-erythro-1-(imidazol-4-yl)glycerol 3-phosphate = 3-(imidazol-4-yl)-2-oxopropyl phosphate + H2O. The protein operates within amino-acid biosynthesis; L-histidine biosynthesis; L-histidine from 5-phospho-alpha-D-ribose 1-diphosphate: step 6/9. In Chlorobium phaeobacteroides (strain BS1), this protein is Imidazoleglycerol-phosphate dehydratase.